We begin with the raw amino-acid sequence, 263 residues long: Aquaglyceroporin (263 aa).

The disordered stretch occupies residues 1–22 (MDQFVFSGGSEGGGELGGDRER). 6 consecutive transmembrane segments (helical) span residues 41–61 (KYFCEFFAALVIVSAVAFGLA), 64–84 (GGAQAAPLSITSTIFALITLF), 113–133 (LCYVAAQLIGGTVGAFIGYGI), 157–177 (VIPTMVMIYAVLVLVFGYGVM), 180–200 (LTVPFVVGACVLAGAFAGATM), and 222–242 (VAALLVTLFGPFLGAMFAFLG).

It belongs to the MIP/aquaporin (TC 1.A.8) family. Multimer.

The protein localises to the vacuole membrane. It catalyses the reaction H2O(in) = H2O(out). The enzyme catalyses glycerol(in) = glycerol(out). It carries out the reaction urea(in) = urea(out). Mediates water and glycerol transport across cell membranes. Permeable to selected sugar alcohols of up to five carbons and urea. Permeable to methylamine/methylammonium. This is Aquaglyceroporin from Toxoplasma gondii (strain ATCC 50611 / Me49).